The sequence spans 265 residues: UPF0354 protein GWCH70_2742 (265 aa).

Belongs to the UPF0354 family.

The polypeptide is UPF0354 protein GWCH70_2742 (Geobacillus sp. (strain WCH70)).